The chain runs to 350 residues: MSKNKLSKGQQRRVNANHQRRLKTSAEKADYDDNLFGEPAEGIVISRFGMHADVESADGEVHRCNIRRTIRSLVTGDRVVWRPGKAAAEGVNVKGIVEAVHERTSVLTRPDFYDGVKPIAANIDQIVIVSAILPELSLNIIDRYLVGCETLQVEPLIVLNKIDLLDDEGMDFVNEQMDIYRNIGYRVLMVSSHTQDGLKPLEEALTGRISIFAGQSGVGKSSLLNALLGLQNEILTNDVSNVSGLGQHTTTAARLYHFPHGGDVIDSPGVREFGLWHLEPEQITQGFVEFHDYLGHCKYRDCKHDADPGCAIREAVENGAIAETRFENYHRILESMAQVKTRKNFSDTDD.

Polar residues predominate over residues 1–17 (MSKNKLSKGQQRRVNAN). The disordered stretch occupies residues 1–27 (MSKNKLSKGQQRRVNANHQRRLKTSAE). The region spanning 104–273 (TSVLTRPDFY…VIDSPGVREF (170 aa)) is the CP-type G domain. GTP contacts are provided by residues 160–163 (NKID) and 214–222 (GQSGVGKSS). Residues C297, C302, H304, and C310 each contribute to the Zn(2+) site.

This sequence belongs to the TRAFAC class YlqF/YawG GTPase family. RsgA subfamily. Monomer. Associates with 30S ribosomal subunit, binds 16S rRNA. Zn(2+) is required as a cofactor.

The protein resides in the cytoplasm. Functionally, one of several proteins that assist in the late maturation steps of the functional core of the 30S ribosomal subunit. Helps release RbfA from mature subunits. May play a role in the assembly of ribosomal proteins into the subunit. Circularly permuted GTPase that catalyzes slow GTP hydrolysis, GTPase activity is stimulated by the 30S ribosomal subunit. This Salmonella agona (strain SL483) protein is Small ribosomal subunit biogenesis GTPase RsgA.